The following is a 138-amino-acid chain: HTH-type transcriptional regulator CymR (138 aa).

Residues 2-125 (KISTKGRYGL…DSTTLEDLAS (124 aa)) enclose the HTH rrf2-type domain. The segment at residues 28 to 51 (LKSIAQTNNLSEHYLEQLVSPLRN) is a DNA-binding region (H-T-H motif).

In terms of assembly, homodimer. Forms homotetramers at higher concentrations of protein. Forms CymR(2):CysK(2) or CymR(4):CysK(4) complexes in the absence of O-acetylserine.

Functionally, master repressor of cysteine metabolism in B.subtilis. Controls the expression of genes involved either in cysteine synthesis from sulfide (cysK), sulfonates (ssu), or methionine (mccAB) or in cystine uptake (tcyP). Activity of CymR is positively regulated by CysK in response to cysteine availability. When cysteine is present, the pool of O-acetylserine (OAS) is low, which leads to the formation of a CymR-CysK complex and transcriptional repression of the CymR regulon occurs. In the absence of cysteine, the OAS pool is high and the CymR-CysK complex is mostly dissociated, leading to a faster dissociation of CymR from its DNA targets and the lifting of CymR-dependent repression. The polypeptide is HTH-type transcriptional regulator CymR (cymR) (Bacillus subtilis (strain 168)).